The following is a 212-amino-acid chain: Golgi-associated RAB2 interactor protein 5A (212 aa).

2 disordered regions span residues 1-21 and 162-212; these read MKGG…LAPA and PFTH…LWGL. Residues 169-185 show a composition bias toward acidic residues; sequence APEEEEEEEEEEEEEEV.

Belongs to the GARIN family. In terms of assembly, interacts (via N-terminus) with RAB2B (in GTP-bound form). In terms of tissue distribution, expressed in testis (at protein level).

The protein localises to the golgi apparatus. In terms of biological role, RAB2B effector protein which promotes cytosolic DNA-induced innate immune responses. Regulates IFN responses against DNA viruses by regulating the CGAS-STING signaling axis. In Mus musculus (Mouse), this protein is Golgi-associated RAB2 interactor protein 5A.